The sequence spans 273 residues: Dermonecrotic toxin LhSicTox-alphaIA2bvi (273 aa).

The active site involves His5. Glu25 and Asp27 together coordinate Mg(2+). The active-site Nucleophile is His41. 2 cysteine pairs are disulfide-bonded: Cys45-Cys51 and Cys47-Cys190. Asp85 contacts Mg(2+).

It belongs to the arthropod phospholipase D family. Class II subfamily. Requires Mg(2+) as cofactor. In terms of tissue distribution, expressed by the venom gland.

It localises to the secreted. The enzyme catalyses an N-(acyl)-sphingosylphosphocholine = an N-(acyl)-sphingosyl-1,3-cyclic phosphate + choline. The catalysed reaction is an N-(acyl)-sphingosylphosphoethanolamine = an N-(acyl)-sphingosyl-1,3-cyclic phosphate + ethanolamine. It carries out the reaction a 1-acyl-sn-glycero-3-phosphocholine = a 1-acyl-sn-glycero-2,3-cyclic phosphate + choline. It catalyses the reaction a 1-acyl-sn-glycero-3-phosphoethanolamine = a 1-acyl-sn-glycero-2,3-cyclic phosphate + ethanolamine. Dermonecrotic toxins cleave the phosphodiester linkage between the phosphate and headgroup of certain phospholipids (sphingolipid and lysolipid substrates), forming an alcohol (often choline) and a cyclic phosphate. This toxin acts on sphingomyelin (SM). It may also act on ceramide phosphoethanolamine (CPE), lysophosphatidylcholine (LPC) and lysophosphatidylethanolamine (LPE), but not on lysophosphatidylserine (LPS), and lysophosphatidylglycerol (LPG). It acts by transphosphatidylation, releasing exclusively cyclic phosphate products as second products. Induces dermonecrosis, hemolysis, increased vascular permeability, edema, inflammatory response, and platelet aggregation. The chain is Dermonecrotic toxin LhSicTox-alphaIA2bvi from Loxosceles hirsuta (Recluse spider).